Here is a 269-residue protein sequence, read N- to C-terminus: Protein SirB1 (269 aa).

This sequence belongs to the UPF0162 family.

Required for maximal expression of sirC, not required to invade host cells. In Salmonella typhi, this protein is Protein SirB1 (sirB1).